The following is a 620-amino-acid chain: 1-deoxy-D-xylulose-5-phosphate synthase (620 aa).

Thiamine diphosphate is bound by residues His-80 and 121-123; that span reads GHS. A Mg(2+)-binding site is contributed by Asp-152. Residues 153–154, Asn-181, Tyr-288, and Glu-370 each bind thiamine diphosphate; that span reads GA. Mg(2+) is bound at residue Asn-181.

It belongs to the transketolase family. DXPS subfamily. In terms of assembly, homodimer. Mg(2+) is required as a cofactor. It depends on thiamine diphosphate as a cofactor.

The enzyme catalyses D-glyceraldehyde 3-phosphate + pyruvate + H(+) = 1-deoxy-D-xylulose 5-phosphate + CO2. It participates in metabolic intermediate biosynthesis; 1-deoxy-D-xylulose 5-phosphate biosynthesis; 1-deoxy-D-xylulose 5-phosphate from D-glyceraldehyde 3-phosphate and pyruvate: step 1/1. Functionally, catalyzes the acyloin condensation reaction between C atoms 2 and 3 of pyruvate and glyceraldehyde 3-phosphate to yield 1-deoxy-D-xylulose-5-phosphate (DXP). The sequence is that of 1-deoxy-D-xylulose-5-phosphate synthase from Escherichia coli (strain SMS-3-5 / SECEC).